A 595-amino-acid chain; its full sequence is Estrogen receptor (595 aa).

Residues 1 to 184 (MTMTLHTKAS…AMESVKETRY (184 aa)) are modulating(transactivation AF-1); mediates interaction with MACROD1. Ser10 carries O-linked (GlcNAc) serine glycosylation. Residues 35–47 (LERALSEVYVDSS) are required for interaction with NCOA1. Positions 35–174 (LERALSEVYV…LSSSSEKGSM (140 aa)) are interaction with DDX5; self-association. 2 positions are modified to phosphoserine; by CDK2: Ser103 and Ser105. The residue at position 118 (Ser118) is a Phosphoserine. Positions 143 to 174 (DSGPPAFYRSNSDNRRQSGRERLSSSSEKGSM) are disordered. The span at 154–165 (SDNRRQSGRERL) shows a compositional bias: basic and acidic residues. Position 167 is a phosphoserine; by CK2 (Ser167). 2 consecutive NR C4-type zinc fingers follow at residues 185 to 205 (CAVCNDYASGYHYGVWSCEGC) and 221 to 245 (CPATNQCTIDKNRRKSCQACRLRKC). Residues 185–250 (CAVCNDYASG…RLRKCYEVGM (66 aa)) constitute a DNA-binding region (nuclear receptor). The mediates interaction with DNTTIP2 stretch occupies residues 185–310 (CAVCNDYASG…TKKNSPALSL (126 aa)). A hinge region spans residues 251-310 (MKGGIRKDRRGGRMLKHKRQRDDLEGRNDMGPSGDMRATNLWPSPLVIKHTKKNSPALSL). Asymmetric dimethylarginine; by PRMT1 is present on Arg260. Positions 260–269 (RGGRMLKHKR) are enriched in basic residues. Residues 260–285 (RGGRMLKHKRQRDDLEGRNDMGPSGD) form a disordered region. The interval 262 to 595 (GRMLKHKRQR…SEAESFPNTI (334 aa)) is interaction with AKAP13. The tract at residues 264-595 (MLKHKRQRDD…SEAESFPNTI (332 aa)) is self-association. An NR LBD domain is found at 311–547 (TADQMVSALL…DLLLEMLDAH (237 aa)). Positions 311–595 (TADQMVSALL…SEAESFPNTI (285 aa)) are transactivation AF-2. The 17beta-estradiol site is built by Glu353 and Arg394. Residue Cys447 is the site of S-palmitoyl cysteine attachment. His524 contacts 17beta-estradiol. Tyr537 bears the Phosphotyrosine; by Tyr-kinases mark. The segment at 554–578 (SRMGVSPEEPSQSQLTTTNSTSSHS) is disordered. Over residues 564–578 (SQSQLTTTNSTSSHS) the composition is skewed to low complexity. Thr571 carries O-linked (GlcNAc) threonine glycosylation.

Belongs to the nuclear hormone receptor family. NR3 subfamily. In terms of assembly, binds DNA as a homodimer. Can form a heterodimer with ESR2. Interacts with coactivator NCOA5. Interacts with PELP1, the interaction is enhanced by 17-beta-estradiol; the interaction increases ESR1 transcriptional activity. Interacts with NCOA7; the interaction is ligand-inducible. Interacts with AKAP13, CUEDC2, HEXIM1, KDM5A, MAP1S, SMARD1, and UBE1C. Interacts with MUC1; the interaction is stimulated by 7 beta-estradiol (E2) and enhances ESR1-mediated transcription. Interacts with DNTTIP2, and UIMC1. Interacts with KMT2D/MLL2. Interacts with ATAD2; the interaction is enhanced by estradiol. Interacts with KIF18A and LDB1. Interacts with RLIM (via its C-terminus). Interacts with MACROD1. Interacts with SH2D4A and PLCG. Interacts with SH2D4A; the interaction blocks binding to PLCG and inhibits estrogen-induced cell proliferation. Interacts with DYNLL1. Interacts with CCDC62; the interaction requires estradiol and appears to enhance the transcription of target genes. Interacts with NR2C1; the interaction prevents homodimerization of ESR1 and suppresses its transcriptional activity and cell growth. Interacts with DNAAF4. Interacts with PRMT2. Interacts with RBFOX2. Interacts with EP300; the interaction is estrogen-dependent and enhanced by CITED1. Interacts with CITED1; the interaction is estrogen-dependent. Interacts with FAM120B, FOXL2, PHB2 and SLC30A9. Interacts with coactivators NCOA3 and NCOA6. Interacts with STK3/MST2 only in the presence of SAV1 and vice-versa. Binds to CSNK1D. Interacts with NCOA2; NCOA2 can interact with ESR1 AF-1 and AF-2 domains simultaneously and mediate their transcriptional synergy. Interacts with DDX5. Interacts with NCOA1; the interaction seems to require a self-association of N-terminal and C-terminal regions. Interacts with ZNF366, DDX17, NFKB1, RELA, SP1 and SP3. Interacts with NRIP1. Interacts with GPER1; the interaction occurs in an estrogen-dependent manner. Interacts with CLOCK and the interaction is stimulated by estrogen. Interacts with TRIP4 (ufmylated); estrogen dependent. Interacts with LMTK3; the interaction phosphorylates ESR1 (in vitro) and protects it against proteasomal degradation. Interacts with CCAR2 (via N-terminus) in a ligand-independent manner. Interacts with ZFHX3. Interacts with SFR1 in a ligand-dependent and -independent manner. Interacts with DCAF13, LATS1 and DCAF1; regulates ESR1 ubiquitination and ubiquitin-mediated proteasomal degradation. Interacts (via DNA-binding domain) with POU4F2 (C-terminus); this interaction increases the estrogen receptor ESR1 transcriptional activity in a DNA- and ligand 17-beta-estradiol-independent manner. Interacts with ESRRB isoform 1. Interacts with UBE3A and WBP2. Interacts with GTF2B. Interacts with RBM39. In the absence of hormonal ligand, interacts with TACC1. Interacts with PI3KR1 or PI3KR2 and PTK2/FAK1. Interacts with SRC. Interacts with BAG1; the interaction is promoted in the absence of estradiol (17-beta-estradiol/E2). Interacts with and ubiquitinated by STUB1; the interaction is promoted in the absence of estradiol (17-beta-estradiol/E2). Interacts with NEDD8. Post-translationally, ubiquitinated; regulated by LATS1 via DCAF1 it leads to ESR1 proteasomal degradation. Deubiquitinated by OTUB1. Ubiquitinated by STUB1/CHIP; in the CA1 hippocampal region following loss of endogenous circulating estradiol (17-beta-estradiol/E2). Ubiquitinated by UBR5, leading to its degradation: UBR5 specifically recognizes and binds ligand-bound ESR1 when it is not associated with coactivators (NCOAs). In presence of NCOAs, the UBR5-degron is not accessible, preventing its ubiquitination and degradation. In terms of processing, phosphorylated by cyclin A/CDK2 and CK1. Phosphorylation probably enhances transcriptional activity. Dephosphorylation at Ser-118 by PPP5C inhibits its transactivation activity. Phosphorylated by LMTK3 (in vitro). Palmitoylated at Cys-447 by ZDHHC7 and ZDHHC21. Palmitoylation is required for plasma membrane targeting and for rapid intracellular signaling via ERK and AKT kinases and cAMP generation, but not for signaling mediated by the nuclear hormone receptor. Post-translationally, dimethylated by PRMT1 at Arg-260. The methylation may favor cytoplasmic localization. Demethylated by JMJD6 at Arg-260.

Its subcellular location is the nucleus. It is found in the cytoplasm. The protein localises to the golgi apparatus. It localises to the cell membrane. Its function is as follows. Nuclear hormone receptor. The steroid hormones and their receptors are involved in the regulation of eukaryotic gene expression and affect cellular proliferation and differentiation in target tissues. Ligand-dependent nuclear transactivation involves either direct homodimer binding to a palindromic estrogen response element (ERE) sequence or association with other DNA-binding transcription factors, such as AP-1/c-Jun, c-Fos, ATF-2, Sp1 and Sp3, to mediate ERE-independent signaling. Ligand binding induces a conformational change allowing subsequent or combinatorial association with multiprotein coactivator complexes through LXXLL motifs of their respective components. Mutual transrepression occurs between the estrogen receptor (ER) and NF-kappa-B in a cell-type specific manner. Decreases NF-kappa-B DNA-binding activity and inhibits NF-kappa-B-mediated transcription from the IL6 promoter and displace RELA/p65 and associated coregulators from the promoter. Recruited to the NF-kappa-B response element of the CCL2 and IL8 promoters and can displace CREBBP. Present with NF-kappa-B components RELA/p65 and NFKB1/p50 on ERE sequences. Can also act synergistically with NF-kappa-B to activate transcription involving respective recruitment adjacent response elements; the function involves CREBBP. Can activate the transcriptional activity of TFF1. Also mediates membrane-initiated estrogen signaling involving various kinase cascades. Essential for MTA1-mediated transcriptional regulation of BRCA1 and BCAS3. Maintains neuronal survival in response to ischemic reperfusion injury when in the presence of circulating estradiol (17-beta-estradiol/E2). This is Estrogen receptor (ESR1) from Mesocricetus auratus (Golden hamster).